Here is a 2156-residue protein sequence, read N- to C-terminus: MAGGILQLVCNATAAENMWINNDPEITFFKKLFRRHTPFASEYIPLYFKSNLDFGQSSSATILSNGDLVHKIFFVCDIPSISAEFINSKNEDVIKTIKNLNSQYIDNDFMRKLNNCINGTIIEYDNICNIIDENIQYYDYYKPIIISIINTLSKYQNKDVLINYQQKIFGKLLNKSNDNLSQNESFQNDSFKLEILDSFFSTNVKYNLVFELIKLIDLEQQFYSQKIPIIPIQNTGKYLANNFVNSVLPAVNNLGNNFGKDFYHRLNTHNAIIGAIESLSISVPTVIIKPFVLNDCYDIYRPNNQNVYFDSTYYSSIIDPNFKLNFMLKSNQVEKYIQSNEFIPIDIIGTNDFIYPEIDNNYNLLFNTQANIMFDNIQSFTDLLFEHYRNLLFDSTENLFFNKSPTPSNIYSYILPTKAYDTKSNNLSDEKINDGPNVFNLNIWFFYFFKYLDQFDVDKFIVYVKDNVHKNLSNACYSFLRNMMVLLKINVDYYMHEISYYMNDMCSKSPSHDLSDTLKNYVPNISESTNQFNKQSGSNLLMVTLIFHRNIIPSIEDMFNFIYEFIENINCNDIENYLEVEIGFVDRETLTELKSTAKQLYQGFYNYFMNKYNKMHFEAEYHCEEINPLVQEYVNHFLTGTSIHDKFYQKRNLNDIIHQLEFYFISETIHIRELQKFYYNIFSNNNLIKNYVDDYGCELIDYFNSVLKTDLEQKYYKVNNIHRYNGESYKMTPYNTRFYGLNDNLPLVYPFDHPPVNPYGVNPDYYSHYRSVTDYVTIPTSNNQILCTEIPINLNNTEPINNRYNDSEYQRFEIDYFRLKHEIFHGTIDNPISDLYKIFISEYDFNVLKLYHLLQQLLDQSNTKPMLSDDLLYKLYITTIYLMNYINEDAGNDTVMSKSIMHQFLEMIEDYLNNQTENISENTINEMVELSDILLKNNQHNYTTDDLIKCNQYINLIKNTDKYDNGIIDRLQIIKYNFLSQYFIYSLESQNISMLKNLDNKFFFKNTGQIINEILQLVDNNPVLDDLSNMEYLYSGEFETEHNHLLCTDSSNLSRYFMNTFNIFTAHELNPIKKLSVRDIYDIIDTTFMSVREIYNICMNNGSINNILVKLDKYQDKLLNKLVLTNKIGQYFYDFLQNKPIEQQNKKDLIKIIDSFGIDLENYMCNKIIPLYNQLVLNNNKNSTIIILAIISKDLDSFFLPNSSASSFKQVIIEDLTNGNKEDPLYLYLKLIGNEYYSYLKFFLDYCCENDLDYDSITNPLESLDITVLKNDNNTNRILSVKDCLNYFMDYLWDHSYPSMKQFGFNEKISDVINKYSSNKSNKSNKSNESDKSSESDKSSESSNHDDKISKIINLLSGSFDTNGFVLNRYLEEFTKNDEISEIQNLSEKSNIIYGLNLYLGKLLILLEQQYNSGLEIKNKISNILYRNKKACTAWIKKLAHYLVDEISISTNSETIDSHKSDWFEIYSQTNLSESRIDGYYKMIGNIDELTIFSNNDKSSRTIILPLCFYFNRNIALSLPLNASINLTYTINIKLKELSDVLFKEEFSEYIDNTGSIVKPKLSNVHLMCEYIYLSNEERQAFVTKHLQYLVDEFQYSTTNITDNNLTPVYKIGTNKISCVVKKNGKKTTETYFNKGIYVDQNNVNVDDNELILRKDLEVKPSKNKSGISSTMIQHTIIDTDPKIHFKRVSIENHFSNPTKMMAILIRPDLHIITDKRDYSSDYFFGEKQWSNYGVHSWYDFSQVRKIREDYYTKFRQKINNLEDPVYGFLNIINHTIENMKIPEIPDKLIKYCEQIKSMYIKHSDEIFDQSNIQKIRDNLHILKINFDITDKQLLLQMIYDICYNMDVSLPTNSIIIDEFRRLDSNFTLDDDNLYVNYEFFKDCICSILKLSILQGRSDELYQLIQQIYDKHNENQINLLINKLSEIIPISNHTYSFTNIMYKAKNLCLLHKCDNHIVNLINQIQDKIDFMNSSELSCVNNMKTVSSTYKDIINQIIVNTNYLDHIPSYIIDTISNKMLETLNIIIDKQYIKIIPYNKLIKPNPKINPLISGHLTFNNISTMPENSDHTFWTACQTYQHFKHDTETGINLYSWAIKPFNEQNSGSANLSRIDRFMSILNIHPIISSKNSASIITMTLSINIINYLSGLCGKAWEKY.

Residues 1319-1345 (NKSNKSNKSNESDKSSESDKSSESSNH) form a disordered region. The segment covering 1326 to 1345 (KSNESDKSSESDKSSESSNH) has biased composition (basic and acidic residues).

This sequence belongs to the NCLDV major capsid protein family.

The protein localises to the virion. The chain is Probable capsid protein 3 from Acanthamoeba polyphaga mimivirus (APMV).